Here is a 249-residue protein sequence, read N- to C-terminus: Proteasome subunit alpha type-7-1A (249 aa).

It belongs to the peptidase T1A family. The 26S proteasome consists of a 20S proteasome core and two 19S regulatory subunits. The 20S proteasome core is composed of 28 subunits that are arranged in four stacked rings, resulting in a barrel-shaped structure. The two end rings are each formed by seven alpha subunits, and the two central rings are each formed by seven beta subunits. The catalytic chamber with the active sites is on the inside of the barrel. In terms of tissue distribution, testis specific.

The protein localises to the cytoplasm. The protein resides in the nucleus. The proteasome is a multicatalytic proteinase complex which is characterized by its ability to cleave peptides with Arg, Phe, Tyr, Leu, and Glu adjacent to the leaving group at neutral or slightly basic pH. The proteasome has an ATP-dependent proteolytic activity. This Drosophila melanogaster (Fruit fly) protein is Proteasome subunit alpha type-7-1A (Prosalpha4T1).